A 442-amino-acid polypeptide reads, in one-letter code: 3-phosphoshikimate 1-carboxyvinyltransferase (442 aa).

3-phosphoshikimate is bound by residues K25, S26, and R30. Residue K25 coordinates phosphoenolpyruvate. The phosphoenolpyruvate site is built by G97 and R125. Residues S170, Q172, D323, and K350 each contribute to the 3-phosphoshikimate site. Q172 contacts phosphoenolpyruvate. Residue D323 is the Proton acceptor of the active site. R354 and R399 together coordinate phosphoenolpyruvate.

Belongs to the EPSP synthase family. In terms of assembly, monomer.

The protein resides in the cytoplasm. The catalysed reaction is 3-phosphoshikimate + phosphoenolpyruvate = 5-O-(1-carboxyvinyl)-3-phosphoshikimate + phosphate. It participates in metabolic intermediate biosynthesis; chorismate biosynthesis; chorismate from D-erythrose 4-phosphate and phosphoenolpyruvate: step 6/7. Catalyzes the transfer of the enolpyruvyl moiety of phosphoenolpyruvate (PEP) to the 5-hydroxyl of shikimate-3-phosphate (S3P) to produce enolpyruvyl shikimate-3-phosphate and inorganic phosphate. The sequence is that of 3-phosphoshikimate 1-carboxyvinyltransferase from Bartonella quintana (strain Toulouse) (Rochalimaea quintana).